Consider the following 702-residue polypeptide: MRNENVAGLLAERASEAGWTDQPAYYAPDVVTHGQIHDGAARLGAVLANRGLCRGDRVLLCMPDSPELVQVLLACLARGILAFLANPELHRDDHAFQERDTQAALVITSGPLCDRFAPSTVVDAADLFSEAARVGPADYEILGGDAAAYATYTSGTTGPPKAAIHRHCDVFAFVEAMCRNALRLTPADIGLSSARMYFAYGLGNSVWFPLATGSSAVVNPLPVGAEVAATLSARFEPSVLYGVPNFFARVVDACSADSFRSVRCVVSAGEALEVGLAERLTEFFGGIPILDGVGSTEVGQTFVSNTVDEWRPGSLGKVLPPYQIRVVAPDGAAAGPGVEGDLWVRGPSIAESYWNWPEPLLTDEGWLDTRDRVCIDDDGWVTYACRADDTEIVGAVNINPREIERLIVEEDAVAEVAVVGVKEATGASTLQAFLVPASAEGIDGSVMRDIHRRLLTRLSAFKVPHRFAVVERLPRTANGKLLRSALRGQTPAKPIWELASAEHRSGAPGQLDDQSASALVSGSREVSLKERLAALQQERHRLVLDAVCGETAKMLGEPDPRSVNRDLAFSELGFDSQMTVELCHRLAAATGLRVPETVGWDYGSISGLAQYLEAELSGADRRVTPQSARSGARALPLIEAQLNKVEELTAAIADGEKPRVAERLRALLGTITEGQEHWGQRIAAASTPDEIFQLIDSEFGES.

The 79-residue stretch at 538–616 (ERHRLVLDAV…GLAQYLEAEL (79 aa)) folds into the Carrier domain. S576 is modified (O-(pantetheine 4'-phosphoryl)serine).

It belongs to the ATP-dependent AMP-binding enzyme family.

The catalysed reaction is holo-[4-hydroxyphenylalkanoate synthase] + 4-hydroxybenzoate + ATP = 4-hydroxyphenyl-[4-hydroxyphenylalkanoate synthase] + AMP + diphosphate. It functions in the pathway lipid metabolism; fatty acid biosynthesis. In terms of biological role, catalyzes the adenylation of p-hydroxybenzoic acid (pHBA) to form p-hydroxybenzoic acid-AMP (pHBA-AMP), which is converted directly to p-hydroxybenzoyl-S-FadD22 (pHBA-S-FAdD22) thioester intermediate in a CoA-independent manner by attack of the phosphopantetheine thiol of FadD22. This intermediate primes the biosynthesis of the phenolphthiocerol (PPOL) by presenting the pHBA starter unit for elongation by Pks15/1. PPOL is an important intermediate in the biosynthesis of phenolic glycolipid (mycosid B). In Mycobacterium marinum (strain ATCC BAA-535 / M), this protein is p-hydroxybenzoic acid--AMP ligase FadD22 (fadD22).